The sequence spans 87 residues: Toxin CngtIII (87 aa).

A signal peptide spans 1–19; sequence MNSLLMITACLVLFGTVWA. In terms of domain architecture, LCN-type CS-alpha/beta spans 20–85; it reads KEGYLVNKST…TYPLPNKTCS (66 aa). Cystine bridges form between cysteine 31–cysteine 84, cysteine 35–cysteine 60, cysteine 44–cysteine 65, and cysteine 48–cysteine 67.

Belongs to the long (4 C-C) scorpion toxin superfamily. Sodium channel inhibitor family. Beta subfamily. As to expression, expressed by the venom gland.

Its subcellular location is the secreted. Functionally, beta toxins bind voltage-independently at site-4 of sodium channels (Nav) and shift the voltage of activation toward more negative potentials thereby affecting sodium channel activation and promoting spontaneous and repetitive firing. The polypeptide is Toxin CngtIII (Centruroides noxius (Mexican scorpion)).